The following is a 535-amino-acid chain: Dimethylaniline monooxygenase [N-oxide-forming] 2 (535 aa).

Residues 9 to 13 (GAGVS), Glu32, 40 to 41 (LW), and 61 to 62 (NT) contribute to the FAD site. NADP(+)-binding positions include 60 to 61 (TN) and 195 to 198 (SAAD). Lys492 is covalently cross-linked (Glycyl lysine isopeptide (Lys-Gly) (interchain with G-Cter in SUMO)). A helical transmembrane segment spans residues 510 to 530 (APVSFLIKVLGLLAIVLAFFF).

This sequence belongs to the FMO family. The cofactor is FAD. Mg(2+) serves as cofactor.

The protein localises to the microsome membrane. It is found in the endoplasmic reticulum membrane. Functionally, catalyzes the oxidative metabolism of numerous xenobiotics, including mainly therapeutic drugs and insecticides that contain a soft nucleophile, most commonly nitrogen and sulfur and participates to their bioactivation. This chain is Dimethylaniline monooxygenase [N-oxide-forming] 2, found in Rattus norvegicus (Rat).